Reading from the N-terminus, the 502-residue chain is Lysine--tRNA ligase (502 aa).

Positions 411 and 418 each coordinate Mg(2+).

It belongs to the class-II aminoacyl-tRNA synthetase family. Homodimer. The cofactor is Mg(2+).

It localises to the cytoplasm. The catalysed reaction is tRNA(Lys) + L-lysine + ATP = L-lysyl-tRNA(Lys) + AMP + diphosphate. In Clostridium tetani (strain Massachusetts / E88), this protein is Lysine--tRNA ligase.